A 69-amino-acid polypeptide reads, in one-letter code: Alpha-conotoxin-like Tx1 (69 aa).

The signal sequence occupies residues 1–21 (MGMRMMFVVFLLVVLASTVVS). Positions 22-49 (STSGRRAFHGRNAAAKASGLVSLTDRRP) are excised as a propeptide. 2 cysteine pairs are disulfide-bonded: Cys-51/Cys-57 and Cys-52/Cys-65. Positions 53–55 (SDP) are ser-Xaa-Pro motif, crucial for potent interaction with nAChR. Gly-66 bears the Glycine amide mark.

Belongs to the conotoxin A superfamily. In terms of tissue distribution, expressed by the venom duct.

The protein localises to the secreted. Functionally, alpha-conotoxins act on postsynaptic membranes, they bind to the nicotinic acetylcholine receptors (nAChR) and thus inhibit them. This is Alpha-conotoxin-like Tx1 from Conus textile (Cloth-of-gold cone).